The sequence spans 360 residues: Photosystem II protein D1 1 (360 aa).

Transmembrane regions (helical) follow at residues tyrosine 29 to valine 46, histidine 118 to leucine 133, and tryptophan 142 to alanine 156. Residue histidine 118 participates in chlorophyll a binding. Tyrosine 126 serves as a coordination point for pheophytin a. The [CaMn4O5] cluster site is built by aspartate 170 and glutamate 189. The chain crosses the membrane as a helical span at residues phenylalanine 197 to leucine 218. A chlorophyll a-binding site is contributed by histidine 198. Residues histidine 215 and serine 264–phenylalanine 265 each bind a quinone. Histidine 215 provides a ligand contact to Fe cation. Fe cation is bound at residue histidine 272. A helical transmembrane segment spans residues phenylalanine 274–leucine 288. [CaMn4O5] cluster is bound by residues histidine 332, glutamate 333, aspartate 342, and alanine 344. Positions alanine 345–glycine 360 are excised as a propeptide.

This sequence belongs to the reaction center PufL/M/PsbA/D family. As to quaternary structure, PSII is composed of 1 copy each of membrane proteins PsbA, PsbB, PsbC, PsbD, PsbE, PsbF, PsbH, PsbI, PsbJ, PsbK, PsbL, PsbM, PsbT, PsbX, PsbY, PsbZ, Psb30/Ycf12, peripheral proteins PsbO, CyanoQ (PsbQ), PsbU, PsbV and a large number of cofactors. It forms dimeric complexes. It depends on The D1/D2 heterodimer binds P680, chlorophylls that are the primary electron donor of PSII, and subsequent electron acceptors. It shares a non-heme iron and each subunit binds pheophytin, quinone, additional chlorophylls, carotenoids and lipids. D1 provides most of the ligands for the Mn4-Ca-O5 cluster of the oxygen-evolving complex (OEC). There is also a Cl(-1) ion associated with D1 and D2, which is required for oxygen evolution. The PSII complex binds additional chlorophylls, carotenoids and specific lipids. as a cofactor. Tyr-161 forms a radical intermediate that is referred to as redox-active TyrZ, YZ or Y-Z. In terms of processing, C-terminally processed by CtpA; processing is essential to allow assembly of the oxygen-evolving complex and thus photosynthetic growth.

Its subcellular location is the cellular thylakoid membrane. It catalyses the reaction 2 a plastoquinone + 4 hnu + 2 H2O = 2 a plastoquinol + O2. In terms of biological role, photosystem II (PSII) is a light-driven water:plastoquinone oxidoreductase that uses light energy to abstract electrons from H(2)O, generating O(2) and a proton gradient subsequently used for ATP formation. It consists of a core antenna complex that captures photons, and an electron transfer chain that converts photonic excitation into a charge separation. The D1/D2 (PsbA/PsbD) reaction center heterodimer binds P680, the primary electron donor of PSII as well as several subsequent electron acceptors. The sequence is that of Photosystem II protein D1 1 from Nostoc sp. (strain PCC 7120 / SAG 25.82 / UTEX 2576).